The primary structure comprises 48 residues: Cytochrome c oxidase subunit 2 (48 aa).

At 1-14 (MAHPAQLGLQDASS) the chain is on the mitochondrial intermembrane side. Residues 15–45 (PIXEELLHFHEDALMIVFLISTLVLYIITTT) form a helical membrane-spanning segment. The Mitochondrial matrix segment spans residues 46-48 (VST).

This sequence belongs to the cytochrome c oxidase subunit 2 family. Component of the cytochrome c oxidase (complex IV, CIV), a multisubunit enzyme composed of 14 subunits. The complex is composed of a catalytic core of 3 subunits MT-CO1, MT-CO2 and MT-CO3, encoded in the mitochondrial DNA, and 11 supernumerary subunits COX4I, COX5A, COX5B, COX6A, COX6B, COX6C, COX7A, COX7B, COX7C, COX8 and NDUFA4, which are encoded in the nuclear genome. The complex exists as a monomer or a dimer and forms supercomplexes (SCs) in the inner mitochondrial membrane with NADH-ubiquinone oxidoreductase (complex I, CI) and ubiquinol-cytochrome c oxidoreductase (cytochrome b-c1 complex, complex III, CIII), resulting in different assemblies (supercomplex SCI(1)III(2)IV(1) and megacomplex MCI(2)III(2)IV(2)). Found in a complex with TMEM177, COA6, COX18, COX20, SCO1 and SCO2. Interacts with TMEM177 in a COX20-dependent manner. Interacts with COX20. Interacts with COX16. Cu cation is required as a cofactor.

It localises to the mitochondrion inner membrane. The catalysed reaction is 4 Fe(II)-[cytochrome c] + O2 + 8 H(+)(in) = 4 Fe(III)-[cytochrome c] + 2 H2O + 4 H(+)(out). In terms of biological role, component of the cytochrome c oxidase, the last enzyme in the mitochondrial electron transport chain which drives oxidative phosphorylation. The respiratory chain contains 3 multisubunit complexes succinate dehydrogenase (complex II, CII), ubiquinol-cytochrome c oxidoreductase (cytochrome b-c1 complex, complex III, CIII) and cytochrome c oxidase (complex IV, CIV), that cooperate to transfer electrons derived from NADH and succinate to molecular oxygen, creating an electrochemical gradient over the inner membrane that drives transmembrane transport and the ATP synthase. Cytochrome c oxidase is the component of the respiratory chain that catalyzes the reduction of oxygen to water. Electrons originating from reduced cytochrome c in the intermembrane space (IMS) are transferred via the dinuclear copper A center (CU(A)) of subunit 2 and heme A of subunit 1 to the active site in subunit 1, a binuclear center (BNC) formed by heme A3 and copper B (CU(B)). The BNC reduces molecular oxygen to 2 water molecules using 4 electrons from cytochrome c in the IMS and 4 protons from the mitochondrial matrix. The chain is Cytochrome c oxidase subunit 2 (mt-co2) from Polypterus sp. (Bichir).